A 186-amino-acid polypeptide reads, in one-letter code: Large ribosomal subunit protein uL10 (186 aa).

Part of the ribosomal stalk of the 50S ribosomal subunit. The N-terminus interacts with L11 and the large rRNA to form the base of the stalk. The C-terminus forms an elongated spine to which L12 dimers bind in a sequential fashion forming a multimeric L10(L12)X complex.

Its function is as follows. Forms part of the ribosomal stalk, playing a central role in the interaction of the ribosome with GTP-bound translation factors. The chain is Large ribosomal subunit protein uL10 from Rhodopseudomonas palustris (strain ATCC BAA-98 / CGA009).